Reading from the N-terminus, the 66-residue chain is DNA-directed RNA polymerase subunit Rpo10 (66 aa).

Positions 7, 10, 47, and 48 each coordinate Zn(2+).

Belongs to the archaeal Rpo10/eukaryotic RPB10 RNA polymerase subunit family. In terms of assembly, part of the RNA polymerase complex. It depends on Zn(2+) as a cofactor.

It localises to the cytoplasm. The catalysed reaction is RNA(n) + a ribonucleoside 5'-triphosphate = RNA(n+1) + diphosphate. In terms of biological role, DNA-dependent RNA polymerase (RNAP) catalyzes the transcription of DNA into RNA using the four ribonucleoside triphosphates as substrates. The polypeptide is DNA-directed RNA polymerase subunit Rpo10 (Halobacterium salinarum (strain ATCC 29341 / DSM 671 / R1)).